Consider the following 584-residue polypeptide: uncharacterized protein (584 aa).

The first 27 residues, 1–27 (MGLSRKKIFTWPLLLTGMAVVSTTFSS), serve as a signal peptide directing secretion. A lipid anchor (N-palmitoyl cysteine) is attached at C28. Residue C28 is the site of S-diacylglycerol cysteine attachment. The segment at 530–570 (NLPKKEGSTNQANQQTNQTNRSTDATKKDSSSDETNKNPLA) is disordered. Over residues 538-552 (TNQANQQTNQTNRST) the composition is skewed to low complexity. A compositionally biased stretch (basic and acidic residues) spans 553–565 (DATKKDSSSDETN).

This sequence belongs to the MG067/MG068/MG395 family.

It is found in the cell membrane. This is an uncharacterized protein from Mycoplasmoides gallisepticum (strain R(low / passage 15 / clone 2)) (Mycoplasma gallisepticum).